The primary structure comprises 452 residues: Gastrin/cholecystokinin type B receptor (452 aa).

Over 1–57 (MELLKLNRSLPGPGPGAALCRPEGPLLNGSGAGNLSCEPPRIRGAGTRELELAVRIT) the chain is Extracellular. Residues Asn7, Asn28, and Asn34 are each glycosylated (N-linked (GlcNAc...) asparagine). The helical transmembrane segment at 58–78 (LYAAIFLMSVAGNVLIIVVLG) threads the bilayer. Residues 79-99 (LSRRLRTVTNAFLLSLAVSDL) lie on the Cytoplasmic side of the membrane. The chain crosses the membrane as a helical span at residues 100–120 (LLAVACMPFTLLPNLMGTFIF). Residues 121–127 (GTVVCKA) are Extracellular-facing. Residues Cys125 and Cys203 are joined by a disulfide bond. A helical membrane pass occupies residues 128-148 (VSYFMGVSVSVSTLSLVAIAL). Residues 149–171 (ERYSAICRPLQARVWQTRSHAAR) are Cytoplasmic-facing. Residues 172–192 (VIVATWMLSGLLMVPYPVYTA) form a helical membrane-spanning segment. The Extracellular portion of the chain corresponds to 193–218 (VQPAGPRVLQCMHRWPSARIRQTWSV). A helical transmembrane segment spans residues 219–239 (LLLLLLFFVPGVVMAVAYGLI). Over 240–339 (SRELYLGLRF…LLAKKRVVRM (100 aa)) the chain is Cytoplasmic. Residues 256 to 285 (ESQSQVGSQGGLPGGAGQGPAHPNGHCRSE) are disordered. Residues 263–273 (SQGGLPGGAGQ) show a composition bias toward gly residues. A helical membrane pass occupies residues 340–360 (LLVIVVLFFLCWLPVYSANTW). At 361–376 (RAFDGPGAHRALSGAP) the chain is on the extracellular side. Residues 377–397 (ISFIHLLSYASACVNPLVYCF) form a helical membrane-spanning segment. At 398–452 (MHRRFRQACLDTCARCCPRPPRARPRPLPDEDPPTPSIASLSRLSYTTISTLGPG) the chain is on the cytoplasmic side. Cys413 carries S-palmitoyl cysteine lipidation.

Belongs to the G-protein coupled receptor 1 family.

Its subcellular location is the cell membrane. Its function is as follows. Receptor for gastrin and cholecystokinin. The CCK-B receptors occur throughout the central nervous system where they modulate anxiety, analgesia, arousal, and neuroleptic activity. This receptor mediates its action by association with G proteins that activate a phosphatidylinositol-calcium second messenger system. The sequence is that of Gastrin/cholecystokinin type B receptor from Sus scrofa (Pig).